The sequence spans 378 residues: D-galactarolactone cycloisomerase (378 aa).

Mg(2+)-binding residues include D194, E220, and E246. H296 (proton acceptor) is an active-site residue.

It belongs to the mandelate racemase/muconate lactonizing enzyme family. Homooctamer. Requires Mg(2+) as cofactor.

The catalysed reaction is D-glucaro-1,4-lactone = 5-dehydro-4-deoxy-D-glucarate + H(+). It catalyses the reaction D-galactaro-1,4-lactone = 5-dehydro-4-deoxy-D-glucarate + H(+). It participates in carbohydrate acid metabolism; D-galacturonate degradation via prokaryotic oxidative pathway. In terms of biological role, catalyzes the ring opening of D-galactaro-1,4-lactone to yield 5-keto-4-deoxy-D-glucarate (KDG) via a beta-elimination reaction. This is a step in the oxidative degradation pathway of D-galacturonate, which allows A.tumefaciens to utilize D-galacturonate as a sole carbon source. To a lesser extent, can also use D-glucaro-1,4-lactone as substrate to produce KDG, but cannot use D-galactaro-1,5-lactone, D-glucaro-6,3-lactone and linear D-glucarate. The chain is D-galactarolactone cycloisomerase (gci) from Agrobacterium fabrum (strain C58 / ATCC 33970) (Agrobacterium tumefaciens (strain C58)).